The chain runs to 256 residues: Large ribosomal subunit protein bL28m (256 aa).

Residues 1–55 (MPLHKVPVGLWKRLRLREGIYSRLPAHYLRSLEEARTPTPVHFRPHGAKFKINPK) constitute a mitochondrion transit peptide.

Belongs to the bacterial ribosomal protein bL28 family. Component of the mitochondrial ribosome large subunit (39S) which comprises a 16S rRNA and about 50 distinct proteins. Interacts with OXA1L.

The protein localises to the mitochondrion. This Bos taurus (Bovine) protein is Large ribosomal subunit protein bL28m (MRPL28).